Reading from the N-terminus, the 370-residue chain is Cobalt-precorrin-5B C(1)-methyltransferase (370 aa).

This sequence belongs to the CbiD family.

The enzyme catalyses Co-precorrin-5B + S-adenosyl-L-methionine = Co-precorrin-6A + S-adenosyl-L-homocysteine. It participates in cofactor biosynthesis; adenosylcobalamin biosynthesis; cob(II)yrinate a,c-diamide from sirohydrochlorin (anaerobic route): step 6/10. Functionally, catalyzes the methylation of C-1 in cobalt-precorrin-5B to form cobalt-precorrin-6A. The polypeptide is Cobalt-precorrin-5B C(1)-methyltransferase (Pseudomonas savastanoi pv. phaseolicola (strain 1448A / Race 6) (Pseudomonas syringae pv. phaseolicola (strain 1448A / Race 6))).